A 271-amino-acid polypeptide reads, in one-letter code: Putative phosphoenolpyruvate synthase regulatory protein (271 aa).

151–158 (GVSRSGKT) provides a ligand contact to ADP.

The protein belongs to the pyruvate, phosphate/water dikinase regulatory protein family. PSRP subfamily.

It catalyses the reaction [pyruvate, water dikinase] + ADP = [pyruvate, water dikinase]-phosphate + AMP + H(+). The catalysed reaction is [pyruvate, water dikinase]-phosphate + phosphate + H(+) = [pyruvate, water dikinase] + diphosphate. Bifunctional serine/threonine kinase and phosphorylase involved in the regulation of the phosphoenolpyruvate synthase (PEPS) by catalyzing its phosphorylation/dephosphorylation. In Burkholderia ambifaria (strain MC40-6), this protein is Putative phosphoenolpyruvate synthase regulatory protein.